The chain runs to 155 residues: MTIKIIEGDFKSATGKYALLVSRWNSFVVEHLKEGALDTLRRHGVSDDDIEIVYAPGAFEFPLAAQKLAASGDYDAIVALGAVIRGGTPHFDYVAGECTKGLAQVSLATGIPVAFGVLTVDSIEQAIERSGTKAGNKGSEAAETALEMVSLLGKL.

Residues W24, 58 to 60, and 82 to 84 each bind 5-amino-6-(D-ribitylamino)uracil; these read AFE and AVI. 87–88 serves as a coordination point for (2S)-2-hydroxy-3-oxobutyl phosphate; sequence GT. H90 functions as the Proton donor in the catalytic mechanism. F115 serves as a coordination point for 5-amino-6-(D-ribitylamino)uracil. R129 provides a ligand contact to (2S)-2-hydroxy-3-oxobutyl phosphate.

The protein belongs to the DMRL synthase family. As to quaternary structure, forms an icosahedral capsid composed of 60 subunits, arranged as a dodecamer of pentamers.

The enzyme catalyses (2S)-2-hydroxy-3-oxobutyl phosphate + 5-amino-6-(D-ribitylamino)uracil = 6,7-dimethyl-8-(1-D-ribityl)lumazine + phosphate + 2 H2O + H(+). It functions in the pathway cofactor biosynthesis; riboflavin biosynthesis; riboflavin from 2-hydroxy-3-oxobutyl phosphate and 5-amino-6-(D-ribitylamino)uracil: step 1/2. Functionally, catalyzes the formation of 6,7-dimethyl-8-ribityllumazine by condensation of 5-amino-6-(D-ribitylamino)uracil with 3,4-dihydroxy-2-butanone 4-phosphate. This is the penultimate step in the biosynthesis of riboflavin. In Teredinibacter turnerae (strain ATCC 39867 / T7901), this protein is 6,7-dimethyl-8-ribityllumazine synthase.